Consider the following 943-residue polypeptide: Isoleucine--tRNA ligase (943 aa).

A 'HIGH' region motif is present at residues 58 to 68 (PYANGTIHIGH). Residue Glu567 coordinates L-isoleucyl-5'-AMP. The 'KMSKS' region motif lies at 608–612 (KMSKS). Lys611 provides a ligand contact to ATP. Cys906, Cys909, Cys926, and Cys929 together coordinate Zn(2+).

The protein belongs to the class-I aminoacyl-tRNA synthetase family. IleS type 1 subfamily. In terms of assembly, monomer. Zn(2+) is required as a cofactor.

The protein localises to the cytoplasm. It carries out the reaction tRNA(Ile) + L-isoleucine + ATP = L-isoleucyl-tRNA(Ile) + AMP + diphosphate. Its function is as follows. Catalyzes the attachment of isoleucine to tRNA(Ile). As IleRS can inadvertently accommodate and process structurally similar amino acids such as valine, to avoid such errors it has two additional distinct tRNA(Ile)-dependent editing activities. One activity is designated as 'pretransfer' editing and involves the hydrolysis of activated Val-AMP. The other activity is designated 'posttransfer' editing and involves deacylation of mischarged Val-tRNA(Ile). This chain is Isoleucine--tRNA ligase, found in Pseudomonas syringae pv. tomato (strain ATCC BAA-871 / DC3000).